The following is a 417-amino-acid chain: Peroxisome biogenesis protein 20 (417 aa).

Residues 1 to 15 (MASCGPSNALQNLSK) show a composition bias toward polar residues. Disordered regions lie at residues 1–47 (MASC…QTQG) and 65–101 (NSFEQSQMGPHFGQQHFGQPHQPQMGQHAPMAHGQQS). Residue Cys4 forms a Glycyl cysteine thioester (Cys-Gly) (interchain with G-Cter in ubiquitin) linkage. Lys15 is covalently cross-linked (Glycyl lysine isopeptide (Lys-Gly) (interchain with G-Cter in ubiquitin)). Basic and acidic residues predominate over residues 17-28 (ASADRSLQHDRM). A compositionally biased stretch (polar residues) spans 37–47 (QRQQFRSQTQG). The span at 71–92 (QMGPHFGQQHFGQPHQPQMGQH) shows a compositional bias: low complexity. 2 consecutive short sequence motifs (wxxxF/Y motif) follow at residues 103 to 107 (WAQSF) and 126 to 130 (WGQDF). The tract at residues 321–361 (GASQENGFQSEAQQTAPLPVHHEAPPPEQIHPHTETGDKQL) is disordered. The span at 323–336 (SQENGFQSEAQQTA) shows a compositional bias: polar residues. Over residues 340 to 361 (VHHEAPPPEQIHPHTETGDKQL) the composition is skewed to basic and acidic residues. Residues 411–415 (WEEDY) carry the WxxxF/Y motif 2 motif.

The protein belongs to the peroxisomal targeting signal receptor family. In terms of assembly, interacts (via WxxxF/Y and LVxEF motifs) with PEX14; promoting translocation through the PEX13-PEX14 docking complex. Interacts with PEX7. Monoubiquitinated at Cys-4 by PEX2 during PEX20 passage through the PEX2-PEX10-PEX12 retrotranslocation channel: monoubiquitination acts as a signal for PEX20 extraction and is required for proper export from peroxisomes and recycling. When PEX5 recycling is compromised, polyubiquitinated at Lys-15 by PEX10 during its passage through the retrotranslocation channel, leading to its degradation.

It is found in the cytoplasm. The protein resides in the cytosol. The protein localises to the peroxisome matrix. Its function is as follows. Coreceptor required for the peroxisomal import of proteins containing a C-terminal PTS2-type peroxisomal targeting signal, such as 3-oxoacyl-CoA thiolase. Acts via its interaction with PEX7, promoting association between PEX7 bound to cargo proteins and the PEX13-PEX14 docking complex. PEX20 along with PEX7 and PTS2-containing cargo proteins are tranlocated into peroxisomes by passing through the PEX13-PEX14 docking complex. PEX20 coreceptor is then retrotranslocated into the cytosol, leading to release of bound cargo in the peroxisome matrix, and reset for a subsequent peroxisome import cycle. Also mediates peroxisomal import of proteins that do not contain PTS1- or PTS2-type peroxisomal targeting signals, such as acyl-CoA oxidases (Aox) izozymes. Import of acyl-CoA oxidases (Aox) izozymes is independent of PEX7. The sequence is that of Peroxisome biogenesis protein 20 (PEX20) from Yarrowia lipolytica (strain CLIB 122 / E 150) (Yeast).